The following is a 34-amino-acid chain: Photosystem II reaction center protein M (34 aa).

Residues 5–25 (ILGLIATALFIIIPTSFLLIL) traverse the membrane as a helical segment.

The protein belongs to the PsbM family. PSII is composed of 1 copy each of membrane proteins PsbA, PsbB, PsbC, PsbD, PsbE, PsbF, PsbH, PsbI, PsbJ, PsbK, PsbL, PsbM, PsbT, PsbX, PsbY, PsbZ, Psb30/Ycf12, at least 3 peripheral proteins of the oxygen-evolving complex and a large number of cofactors. It forms dimeric complexes.

The protein localises to the plastid. Its subcellular location is the chloroplast thylakoid membrane. One of the components of the core complex of photosystem II (PSII). PSII is a light-driven water:plastoquinone oxidoreductase that uses light energy to abstract electrons from H(2)O, generating O(2) and a proton gradient subsequently used for ATP formation. It consists of a core antenna complex that captures photons, and an electron transfer chain that converts photonic excitation into a charge separation. This subunit is found at the monomer-monomer interface. The chain is Photosystem II reaction center protein M from Nephroselmis olivacea (Green alga).